Reading from the N-terminus, the 158-residue chain is tRNA (cytidine(34)-2'-O)-methyltransferase (158 aa).

The S-adenosyl-L-methionine site is built by Gly103, Ile123, and Ser131.

It belongs to the class IV-like SAM-binding methyltransferase superfamily. RNA methyltransferase TrmH family. TrmL subfamily. Homodimer.

It is found in the cytoplasm. It catalyses the reaction cytidine(34) in tRNA + S-adenosyl-L-methionine = 2'-O-methylcytidine(34) in tRNA + S-adenosyl-L-homocysteine + H(+). The enzyme catalyses 5-carboxymethylaminomethyluridine(34) in tRNA(Leu) + S-adenosyl-L-methionine = 5-carboxymethylaminomethyl-2'-O-methyluridine(34) in tRNA(Leu) + S-adenosyl-L-homocysteine + H(+). In terms of biological role, methylates the ribose at the nucleotide 34 wobble position in the two leucyl isoacceptors tRNA(Leu)(CmAA) and tRNA(Leu)(cmnm5UmAA). Catalyzes the methyl transfer from S-adenosyl-L-methionine to the 2'-OH of the wobble nucleotide. This Ancylobacter novellus (strain ATCC 8093 / DSM 506 / JCM 20403 / CCM 1077 / IAM 12100 / NBRC 12443 / NCIMB 10456) (Starkeya novella) protein is tRNA (cytidine(34)-2'-O)-methyltransferase.